A 1207-amino-acid polypeptide reads, in one-letter code: DNA-directed RNA polymerase subunit beta' (1207 aa).

Zn(2+) is bound by residues Cys60, Cys62, Cys75, and Cys78. Asp450, Asp452, and Asp454 together coordinate Mg(2+). The Zn(2+) site is built by Cys818, Cys892, Cys899, and Cys902.

Belongs to the RNA polymerase beta' chain family. The RNAP catalytic core consists of 2 alpha, 1 beta, 1 beta' and 1 omega subunit. When a sigma factor is associated with the core the holoenzyme is formed, which can initiate transcription. Mg(2+) serves as cofactor. Zn(2+) is required as a cofactor.

The enzyme catalyses RNA(n) + a ribonucleoside 5'-triphosphate = RNA(n+1) + diphosphate. Its function is as follows. DNA-dependent RNA polymerase catalyzes the transcription of DNA into RNA using the four ribonucleoside triphosphates as substrates. The sequence is that of DNA-directed RNA polymerase subunit beta' from Lactococcus lactis subsp. cremoris (strain SK11).